Consider the following 454-residue polypeptide: Glutamyl-tRNA reductase (454 aa).

Substrate-binding positions include 50–53, serine 103, 108–110, and glutamine 114; these read TCNR and EDQ. Cysteine 51 acts as the Nucleophile in catalysis. 182–187 provides a ligand contact to NADP(+); sequence GAGEMG. The disordered stretch occupies residues 407-454; that stretch reads LFDPNFGGDTPQPDRPDDIPRAAERGDISGDDLPDDVPNHIAEKVSDG. Composition is skewed to basic and acidic residues over residues 418 to 434 and 443 to 454; these read QPDRPDDIPRAAERGDI and VPNHIAEKVSDG.

This sequence belongs to the glutamyl-tRNA reductase family. Homodimer.

It carries out the reaction (S)-4-amino-5-oxopentanoate + tRNA(Glu) + NADP(+) = L-glutamyl-tRNA(Glu) + NADPH + H(+). Its pathway is porphyrin-containing compound metabolism; protoporphyrin-IX biosynthesis; 5-aminolevulinate from L-glutamyl-tRNA(Glu): step 1/2. Functionally, catalyzes the NADPH-dependent reduction of glutamyl-tRNA(Glu) to glutamate 1-semialdehyde (GSA). The sequence is that of Glutamyl-tRNA reductase from Haloquadratum walsbyi (strain DSM 16790 / HBSQ001).